Reading from the N-terminus, the 426-residue chain is Tektin-1 (426 aa).

Coiled coils occupy residues Lys21–Leu84, Leu268–Glu307, and Lys339–Ile383. The disordered stretch occupies residues Ser396–Asp426.

This sequence belongs to the tektin family. As to quaternary structure, microtubule inner protein component of sperm flagellar doublet microtubules. Ubiquitinated, leading to its degradation. Deubiquitinated by USP16, promoting its stability.

It localises to the cytoplasm. It is found in the cytoskeleton. The protein localises to the cilium axoneme. Its subcellular location is the flagellum axoneme. Functionally, microtubule inner protein (MIP) part of the dynein-decorated doublet microtubules (DMTs) in cilia and flagellar axoneme. Forms filamentous polymers in the walls of ciliary and flagellar microtubules. This chain is Tektin-1 (TEKT1), found in Canis lupus familiaris (Dog).